The chain runs to 248 residues: Small ribosomal subunit protein uS2 (248 aa).

This sequence belongs to the universal ribosomal protein uS2 family.

The polypeptide is Small ribosomal subunit protein uS2 (Herminiimonas arsenicoxydans).